The chain runs to 508 residues: DDB1- and CUL4-associated factor 10 (508 aa).

The interval 1–75 is disordered; that stretch reads MSSGHPSDNE…GSASGSGCRG (75 aa). Residues 7-17 are compositionally biased toward basic and acidic residues; that stretch reads SDNEEPRADLL. Acidic residues predominate over residues 18-32; it reads REEEEEEEEEEDSDE. The span at 63-75 shows a compositional bias: gly residues; the sequence is GGTGSASGSGCRG. WD repeat units lie at residues 126–165, 169–207, 211–250, and 256–295; these read QTHGAVFNLEYSPDGSVLTVACEQTEVLLFDPVSSRHIKT, AHEDCVNNIRFLDNRLFATCSDDTTIALWDLRKLNSKVC, GHASWVKNIEYDTHTRLLVTSGFDGNVITWDTNRFTEDGC, and FHTRYLMRMRLTPDCSKMLISTSSGYLLILHDLDLTQSLE. The segment at 307–343 is disordered; sequence PPLSTEGSSAGSRSGGPRHTIDNKNHPHREGLSPRNS. Basic and acidic residues predominate over residues 325-338; the sequence is HTIDNKNHPHREGL. WD repeat units follow at residues 356-396, 419-457, and 475-508; these read DRGN…QEGA, VGRGYIKELCFSPDGRLICSPYGYGVRLLAFDENCAELV, and SHSDVVLTSKFSPTHCQFASGCLSGRVALYQPHF.

This sequence belongs to the WD repeat DCAF10 family.

It participates in protein modification; protein ubiquitination. In terms of biological role, may function as a substrate receptor for CUL4-DDB1 E3 ubiquitin-protein ligase complex. This is DDB1- and CUL4-associated factor 10 (dcaf10) from Danio rerio (Zebrafish).